The following is a 651-amino-acid chain: Chaperone protein dnaK1 (651 aa).

Phosphothreonine; by autocatalysis is present on Thr197.

The protein belongs to the heat shock protein 70 family.

Functionally, acts as a chaperone. In Thermosynechococcus vestitus (strain NIES-2133 / IAM M-273 / BP-1), this protein is Chaperone protein dnaK1 (dnaK1).